The following is a 576-amino-acid chain: Proline--tRNA ligase (576 aa).

This sequence belongs to the class-II aminoacyl-tRNA synthetase family. ProS type 1 subfamily. Homodimer.

The protein localises to the cytoplasm. It carries out the reaction tRNA(Pro) + L-proline + ATP = L-prolyl-tRNA(Pro) + AMP + diphosphate. Its function is as follows. Catalyzes the attachment of proline to tRNA(Pro) in a two-step reaction: proline is first activated by ATP to form Pro-AMP and then transferred to the acceptor end of tRNA(Pro). As ProRS can inadvertently accommodate and process non-cognate amino acids such as alanine and cysteine, to avoid such errors it has two additional distinct editing activities against alanine. One activity is designated as 'pretransfer' editing and involves the tRNA(Pro)-independent hydrolysis of activated Ala-AMP. The other activity is designated 'posttransfer' editing and involves deacylation of mischarged Ala-tRNA(Pro). The misacylated Cys-tRNA(Pro) is not edited by ProRS. In Magnetococcus marinus (strain ATCC BAA-1437 / JCM 17883 / MC-1), this protein is Proline--tRNA ligase.